The primary structure comprises 336 residues: tRNA-cytidine(32) 2-sulfurtransferase (336 aa).

Positions 1–34 are disordered; it reads MNAPEILNGAATASPADATEATQTAARAKTPLTR. Residues 10–22 show a composition bias toward low complexity; it reads AATASPADATEAT. The PP-loop motif signature appears at 75–80; the sequence is SGGKDS. Cys150, Cys153, and Cys241 together coordinate [4Fe-4S] cluster.

The protein belongs to the TtcA family. As to quaternary structure, homodimer. Requires Mg(2+) as cofactor. [4Fe-4S] cluster is required as a cofactor.

The protein localises to the cytoplasm. It carries out the reaction cytidine(32) in tRNA + S-sulfanyl-L-cysteinyl-[cysteine desulfurase] + AH2 + ATP = 2-thiocytidine(32) in tRNA + L-cysteinyl-[cysteine desulfurase] + A + AMP + diphosphate + H(+). It participates in tRNA modification. Its function is as follows. Catalyzes the ATP-dependent 2-thiolation of cytidine in position 32 of tRNA, to form 2-thiocytidine (s(2)C32). The sulfur atoms are provided by the cysteine/cysteine desulfurase (IscS) system. The polypeptide is tRNA-cytidine(32) 2-sulfurtransferase (Paraburkholderia phytofirmans (strain DSM 17436 / LMG 22146 / PsJN) (Burkholderia phytofirmans)).